Consider the following 307-residue polypeptide: Beta-lactamase (307 aa).

Positions 1–34 form a signal peptide, tat-type signal; sequence MRNRGFGRRELLVAMAMLVSVTGCARHASGARPA. The Acyl-ester intermediate role is filled by Ser-84. Substrate is bound at residue Ser-142. Catalysis depends on Glu-182, which acts as the Proton acceptor. A substrate-binding site is contributed by 251–253; it reads TGT.

This sequence belongs to the class-A beta-lactamase family. As to quaternary structure, monomer. Exported by the Tat system. The position of the signal peptide cleavage has not been experimentally proven.

Its subcellular location is the periplasm. The protein localises to the secreted. It catalyses the reaction a beta-lactam + H2O = a substituted beta-amino acid. Its activity is regulated as follows. Is inhibited by clavulanate. Extended spectrum beta-lactamase (ESBL) that inactivates beta-lactam antibiotics by hydrolyzing the amide group of the beta-lactam ring. Displays high levels of penicillinase and cephalosporinase activity as well as measurable activity with carbapenems, including imipenem and meropenem. Plays a primary role in the intrinsic resistance of mycobacteria to beta-lactam antibiotics. The sequence is that of Beta-lactamase (blaC) from Mycobacterium bovis (strain ATCC BAA-935 / AF2122/97).